Consider the following 643-residue polypeptide: Arginine--tRNA ligase, mitochondrial (643 aa).

The 'HIGH' region signature appears at 188-198 (PNIAKPFHAGH).

It belongs to the class-I aminoacyl-tRNA synthetase family.

It is found in the mitochondrion matrix. The enzyme catalyses tRNA(Arg) + L-arginine + ATP = L-arginyl-tRNA(Arg) + AMP + diphosphate. The protein is Arginine--tRNA ligase, mitochondrial (MSR1) of Saccharomyces cerevisiae (strain ATCC 204508 / S288c) (Baker's yeast).